The primary structure comprises 320 residues: 4-hydroxyproline 2-epimerase (320 aa).

Cys98 functions as the Proton acceptor in the catalytic mechanism. Residues 99-100 (GH), His218, and Asp242 each bind substrate. The active-site Proton donor is the Cys246. Position 247–248 (247–248 (GT)) interacts with substrate.

Belongs to the proline racemase family.

It carries out the reaction trans-4-hydroxy-L-proline = cis-4-hydroxy-D-proline. In terms of biological role, catalyzes the epimerization of trans-4-hydroxy-L-proline (t4LHyp) to cis-4-hydroxy-D-proline (c4DHyp). Is likely involved in a degradation pathway that converts t4LHyp to alpha-ketoglutarate. Displays no proline racemase activity. The protein is 4-hydroxyproline 2-epimerase of Burkholderia pseudomallei (strain 1710b).